We begin with the raw amino-acid sequence, 199 residues long: Recombination protein RecR (199 aa).

Residues 57–72 form a C4-type zinc finger; sequence CQSCRTFTEETYCPIC. Positions 81–176 constitute a Toprim domain; sequence DIICVVETPA…MVSRIAHGVP (96 aa).

The protein belongs to the RecR family.

In terms of biological role, may play a role in DNA repair. It seems to be involved in an RecBC-independent recombinational process of DNA repair. It may act with RecF and RecO. This Shewanella halifaxensis (strain HAW-EB4) protein is Recombination protein RecR.